A 408-amino-acid polypeptide reads, in one-letter code: 1-deoxy-D-xylulose 5-phosphate reductoisomerase (408 aa).

NADPH-binding residues include Thr27, Gly28, Ser29, Ile30, Ala53, Arg54, Asn55, and Asn140. Lys141 provides a ligand contact to 1-deoxy-D-xylulose 5-phosphate. An NADPH-binding site is contributed by Glu142. A Mn(2+)-binding site is contributed by Asp166. Residues Ser167, Glu168, Ser192, and His215 each coordinate 1-deoxy-D-xylulose 5-phosphate. Glu168 is a binding site for Mn(2+). NADPH is bound at residue Gly221. 1-deoxy-D-xylulose 5-phosphate-binding residues include Ser228, Asn233, Lys234, and Glu237. Position 237 (Glu237) interacts with Mn(2+).

This sequence belongs to the DXR family. Mg(2+) serves as cofactor. It depends on Mn(2+) as a cofactor.

The enzyme catalyses 2-C-methyl-D-erythritol 4-phosphate + NADP(+) = 1-deoxy-D-xylulose 5-phosphate + NADPH + H(+). It functions in the pathway isoprenoid biosynthesis; isopentenyl diphosphate biosynthesis via DXP pathway; isopentenyl diphosphate from 1-deoxy-D-xylulose 5-phosphate: step 1/6. Catalyzes the NADPH-dependent rearrangement and reduction of 1-deoxy-D-xylulose-5-phosphate (DXP) to 2-C-methyl-D-erythritol 4-phosphate (MEP). The polypeptide is 1-deoxy-D-xylulose 5-phosphate reductoisomerase (Nitratidesulfovibrio vulgaris (strain ATCC 29579 / DSM 644 / CCUG 34227 / NCIMB 8303 / VKM B-1760 / Hildenborough) (Desulfovibrio vulgaris)).